The chain runs to 224 residues: 4'-phosphopantetheinyl transferase (224 aa).

Mg(2+) is bound by residues D107, E109, and E151. The segment at 158–189 (GKGLSLPLDSFSVRLKDDGHVSIELPDGHEPC) is peptidyl carrier protein binding.

This sequence belongs to the P-Pant transferase superfamily. Gsp/Sfp/HetI/AcpT family. The cofactor is Mg(2+).

The enzyme catalyses apo-[peptidyl-carrier protein] + CoA = holo-[peptidyl-carrier protein] + adenosine 3',5'-bisphosphate + H(+). May activate the peptidyl carrier protein (PCP) domains of surfactin synthetase SRF1/2/3 and iturin A synthetase, by transferring the 4'-phosphopantetheinyl moiety of coenzyme A (CoA) to a serine residue. Required for the coproduction of the lipopeptide antibiotics, iturin A and surfactin. The protein is 4'-phosphopantetheinyl transferase (lpa-14) of Bacillus subtilis.